Consider the following 200-residue polypeptide: Proteasome subunit beta 2 (200 aa).

The propeptide at 1–7 (MEEKKTG) is removed in mature form; by autocatalysis. Residue Thr8 is the Nucleophile of the active site.

Belongs to the peptidase T1B family. As to quaternary structure, the 20S proteasome core is composed of 14 alpha and 14 beta subunits that assemble into four stacked heptameric rings, resulting in a barrel-shaped structure. The two inner rings, each composed of seven catalytic beta subunits, are sandwiched by two outer rings, each composed of seven alpha subunits. The catalytic chamber with the active sites is on the inside of the barrel. Has a gated structure, the ends of the cylinder being occluded by the N-termini of the alpha-subunits. Is capped at one or both ends by the proteasome regulatory ATPase, PAN.

It localises to the cytoplasm. It catalyses the reaction Cleavage of peptide bonds with very broad specificity.. With respect to regulation, the formation of the proteasomal ATPase PAN-20S proteasome complex, via the docking of the C-termini of PAN into the intersubunit pockets in the alpha-rings, triggers opening of the gate for substrate entry. Interconversion between the open-gate and close-gate conformations leads to a dynamic regulation of the 20S proteasome proteolysis activity. Its function is as follows. Component of the proteasome core, a large protease complex with broad specificity involved in protein degradation. The sequence is that of Proteasome subunit beta 2 from Thermococcus gammatolerans (strain DSM 15229 / JCM 11827 / EJ3).